We begin with the raw amino-acid sequence, 312 residues long: Glycerol-3-phosphate dehydrogenase [NAD(P)+] (312 aa).

NADPH is bound by residues Trp11, Arg30, Arg31, and Lys95. Residues Lys95, Gly123, and Ser125 each contribute to the sn-glycerol 3-phosphate site. Residue Ala127 coordinates NADPH. Positions 177, 230, 240, 241, and 242 each coordinate sn-glycerol 3-phosphate. The active-site Proton acceptor is Lys177. NADPH is bound at residue Arg241. The NADPH site is built by Val265 and Glu267.

Belongs to the NAD-dependent glycerol-3-phosphate dehydrogenase family.

It is found in the cytoplasm. The catalysed reaction is sn-glycerol 3-phosphate + NAD(+) = dihydroxyacetone phosphate + NADH + H(+). It carries out the reaction sn-glycerol 3-phosphate + NADP(+) = dihydroxyacetone phosphate + NADPH + H(+). Its pathway is membrane lipid metabolism; glycerophospholipid metabolism. Catalyzes the reduction of the glycolytic intermediate dihydroxyacetone phosphate (DHAP) to sn-glycerol 3-phosphate (G3P), the key precursor for phospholipid synthesis. The protein is Glycerol-3-phosphate dehydrogenase [NAD(P)+] of Helicobacter acinonychis (strain Sheeba).